Reading from the N-terminus, the 173-residue chain is MPRSQRNDNFIDKTFTVMADLILKVLPTSSQSKTAFAYYRDGMSAQADGEYAEALENYQAALELEEDPTDRSYILYNIGLIHASNGEHEKALEYYHQALELNPRMPQALNNIAVIYHYLGTQAEEQQRLEEAEQFFDRAADYWKRAIQLAPNNYIEAQNWLKTTGRSNIDVYF.

TPR repeat units lie at residues 35-68 (AFAYYRDGMSAQADGEYAEALENYQAALELEEDP), 72-105 (SYILYNIGLIHASNGEHEKALEYYHQALELNPRM), and 113-146 (AVIYHYLGTQAEEQQRLEEAEQFFDRAADYWKRA).

This sequence belongs to the Ycf3 family.

The protein resides in the cellular thylakoid membrane. In terms of biological role, essential for the assembly of the photosystem I (PSI) complex. May act as a chaperone-like factor to guide the assembly of the PSI subunits. The protein is Photosystem I assembly protein Ycf3 of Thermosynechococcus vestitus (strain NIES-2133 / IAM M-273 / BP-1).